Reading from the N-terminus, the 105-residue chain is Protein Rev (105 aa).

Residue Ser5 is modified to Phosphoserine; by host CK2. The interval 18–26 (IIKILYQSN) is homomultimerization. Positions 24 to 35 (QSNPYPDSSQGT) are enriched in polar residues. Disordered stretches follow at residues 24 to 49 (QSNPYPDSSQGTRQARRNRRRRWRAR) and 65 to 105 (LGGP…ATTE). A Nuclear localization signal and RNA-binding (RRE) motif is present at residues 35–51 (TRQARRNRRRRWRARQR). A compositionally biased stretch (basic residues) spans 37 to 49 (QARRNRRRRWRAR). The Nuclear export signal and binding to XPO1 motif lies at 74–85 (LPLPPLGRLTLD). The span at 95–105 (TESQQGTATTE) shows a compositional bias: polar residues.

Belongs to the HIV-1 REV protein family. In terms of assembly, homomultimer; when bound to the RRE. Multimeric assembly is essential for activity and may involve XPO1. Binds to human KPNB1, XPO1, TNPO1, RANBP5 and IPO7. Interacts with the viral Integrase. Interacts with human KHDRBS1. Interacts with human NAP1; this interaction decreases Rev multimerization and stimulates its activity. Interacts with human DEAD-box helicases DDX3 and DDX24; these interactions may serve for viral RNA export to the cytoplasm and packaging, respectively. Interacts with human PSIP1; this interaction may inhibit HIV-1 DNA integration by promoting dissociation of the Integrase-LEDGF/p75 complex. In terms of processing, asymmetrically arginine dimethylated at one site by host PRMT6. Methylation impairs the RNA-binding activity and export of viral RNA from the nucleus to the cytoplasm. Phosphorylated by protein kinase CK2. Presence of, and maybe binding to the N-terminus of the regulatory beta subunit of CK2 is necessary for CK2-mediated Rev's phosphorylation.

Its subcellular location is the host nucleus. The protein localises to the host nucleolus. It localises to the host cytoplasm. Escorts unspliced or incompletely spliced viral pre-mRNAs (late transcripts) out of the nucleus of infected cells. These pre-mRNAs carry a recognition sequence called Rev responsive element (RRE) located in the env gene, that is not present in fully spliced viral mRNAs (early transcripts). This function is essential since most viral proteins are translated from unspliced or partially spliced pre-mRNAs which cannot exit the nucleus by the pathway used by fully processed cellular mRNAs. Rev itself is translated from a fully spliced mRNA that readily exits the nucleus. Rev's nuclear localization signal (NLS) binds directly to KPNB1/Importin beta-1 without previous binding to KPNA1/Importin alpha-1. KPNB1 binds to the GDP bound form of RAN (Ran-GDP) and targets Rev to the nucleus. In the nucleus, the conversion from Ran-GDP to Ran-GTP dissociates Rev from KPNB1 and allows Rev's binding to the RRE in viral pre-mRNAs. Rev multimerization on the RRE via cooperative assembly exposes its nuclear export signal (NES) to the surface. Rev can then form a complex with XPO1/CRM1 and Ran-GTP, leading to nuclear export of the complex. Conversion from Ran-GTP to Ran-GDP mediates dissociation of the Rev/RRE/XPO1/RAN complex, so that Rev can return to the nucleus for a subsequent round of export. Beside KPNB1, also seems to interact with TNPO1/Transportin-1, RANBP5/IPO5 and IPO7/RANBP7 for nuclear import. The nucleoporin-like HRB/RIP is an essential cofactor that probably indirectly interacts with Rev to release HIV RNAs from the perinuclear region to the cytoplasm. The sequence is that of Protein Rev from Homo sapiens (Human).